We begin with the raw amino-acid sequence, 156 residues long: ATP synthase subunit b (156 aa).

A helical transmembrane segment spans residues 7 to 27 (LFAQLVVFFILAWFTMKFVWP).

It belongs to the ATPase B chain family. F-type ATPases have 2 components, F(1) - the catalytic core - and F(0) - the membrane proton channel. F(1) has five subunits: alpha(3), beta(3), gamma(1), delta(1), epsilon(1). F(0) has four main subunits: a(1), b(2) and c(10-14). The alpha and beta chains form an alternating ring which encloses part of the gamma chain. F(1) is attached to F(0) by a central stalk formed by the gamma and epsilon chains, while a peripheral stalk is formed by the delta and b chains.

It localises to the cell inner membrane. In terms of biological role, f(1)F(0) ATP synthase produces ATP from ADP in the presence of a proton or sodium gradient. F-type ATPases consist of two structural domains, F(1) containing the extramembraneous catalytic core and F(0) containing the membrane proton channel, linked together by a central stalk and a peripheral stalk. During catalysis, ATP synthesis in the catalytic domain of F(1) is coupled via a rotary mechanism of the central stalk subunits to proton translocation. Component of the F(0) channel, it forms part of the peripheral stalk, linking F(1) to F(0). The sequence is that of ATP synthase subunit b from Methylibium petroleiphilum (strain ATCC BAA-1232 / LMG 22953 / PM1).